A 950-amino-acid chain; its full sequence is Glycine dehydrogenase (decarboxylating) (950 aa).

The residue at position 698 (K698) is an N6-(pyridoxal phosphate)lysine.

The protein belongs to the GcvP family. In terms of assembly, the glycine cleavage system is composed of four proteins: P, T, L and H. Requires pyridoxal 5'-phosphate as cofactor.

It catalyses the reaction N(6)-[(R)-lipoyl]-L-lysyl-[glycine-cleavage complex H protein] + glycine + H(+) = N(6)-[(R)-S(8)-aminomethyldihydrolipoyl]-L-lysyl-[glycine-cleavage complex H protein] + CO2. Its function is as follows. The glycine cleavage system catalyzes the degradation of glycine. The P protein binds the alpha-amino group of glycine through its pyridoxal phosphate cofactor; CO(2) is released and the remaining methylamine moiety is then transferred to the lipoamide cofactor of the H protein. This chain is Glycine dehydrogenase (decarboxylating), found in Neisseria gonorrhoeae (strain ATCC 700825 / FA 1090).